We begin with the raw amino-acid sequence, 85 residues long: Arminin 524 (85 aa).

The N-terminal stretch at 1–18 (MKAVFAILFLAFIALTYA) is a signal peptide. Residues 19–57 (KSYDEVKEEIKNEVEREIFEDLEEESDELDNDVEEFNDA) constitute a propeptide that is removed on maturation. Alanine 82 is modified (alanine amide).

The protein belongs to the arminin family. In terms of tissue distribution, expressed in entodermal epithelium along the body column.

Its subcellular location is the secreted. It is found in the target cell membrane. In terms of biological role, antimicrobial peptide with a broad-spectrum antimicrobial activity. Keeps its antibacterial activity under a wide range of salt concentrations that mimic physiological conditions of human blood, which is surprising, since Hydra is an obligate freshwater animal with nearly no salt tolerance. Does not affect red blood cells. The polypeptide is Arminin 524 (Hydra oligactis (Brown hydra)).